Here is a 340-residue protein sequence, read N- to C-terminus: Ferredoxin--NADP reductase (340 aa).

FAD contacts are provided by Thr20, Asp39, Gln47, Tyr52, Val92, Phe126, Asp293, and Thr334.

The protein belongs to the ferredoxin--NADP reductase type 2 family. As to quaternary structure, homodimer. It depends on FAD as a cofactor.

It catalyses the reaction 2 reduced [2Fe-2S]-[ferredoxin] + NADP(+) + H(+) = 2 oxidized [2Fe-2S]-[ferredoxin] + NADPH. The polypeptide is Ferredoxin--NADP reductase (Gluconobacter oxydans (strain 621H) (Gluconobacter suboxydans)).